Reading from the N-terminus, the 155-residue chain is Small ribosomal subunit protein uS7c (155 aa).

The protein belongs to the universal ribosomal protein uS7 family. In terms of assembly, part of the 30S ribosomal subunit.

The protein localises to the plastid. Its subcellular location is the chloroplast. In terms of biological role, one of the primary rRNA binding proteins, it binds directly to 16S rRNA where it nucleates assembly of the head domain of the 30S subunit. The sequence is that of Small ribosomal subunit protein uS7c (rps7) from Cabomba caroliniana (Carolina fanwort).